The sequence spans 429 residues: SET domain-containing protein 14 (429 aa).

Cys-26, Cys-29, Cys-39, Cys-42, Cys-48, Cys-52, His-60, and Cys-64 together coordinate Zn(2+). The segment at 26 to 64 adopts an MYND-type zinc-finger fold; sequence CNQCLTSMAELKKCSACRRLAYCSQECQRADWKLHKVEC.

Its subcellular location is the nucleus. This chain is SET domain-containing protein 14 (set-14), found in Caenorhabditis elegans.